A 329-amino-acid chain; its full sequence is GTPase Obg (329 aa).

Residues 1–159 enclose the Obg domain; the sequence is MQFIDQAIID…WSLQLELKLL (159 aa). Residues 160–328 enclose the OBG-type G domain; sequence AEVGIIGLPN…LLSSIWNELG (169 aa). ATP-binding positions include 166 to 173, 191 to 195, 213 to 216, 280 to 283, and 309 to 311; these read GLPNAGKS, FTTLI, DIPG, NKKE, and SAV. Mg(2+) contacts are provided by Ser173 and Thr193.

Belongs to the TRAFAC class OBG-HflX-like GTPase superfamily. OBG GTPase family. Monomer. It depends on Mg(2+) as a cofactor.

It is found in the cytoplasm. Its function is as follows. An essential GTPase which binds GTP, GDP and possibly (p)ppGpp with moderate affinity, with high nucleotide exchange rates and a fairly low GTP hydrolysis rate. Plays a role in control of the cell cycle, stress response, ribosome biogenesis and in those bacteria that undergo differentiation, in morphogenesis control. The chain is GTPase Obg from Prochlorococcus marinus (strain NATL2A).